A 404-amino-acid chain; its full sequence is Sulfate adenylyltransferase (404 aa).

It belongs to the sulfate adenylyltransferase family.

It carries out the reaction sulfate + ATP + H(+) = adenosine 5'-phosphosulfate + diphosphate. Its pathway is sulfur metabolism; hydrogen sulfide biosynthesis; sulfite from sulfate: step 1/3. The protein is Sulfate adenylyltransferase of Chlorobaculum tepidum (strain ATCC 49652 / DSM 12025 / NBRC 103806 / TLS) (Chlorobium tepidum).